A 156-amino-acid chain; its full sequence is Probable succinate transporter subunit YjjB (156 aa).

4 helical membrane passes run 7 to 27 (WALL…AMVF), 54 to 74 (FGMN…IIGI), 86 to 106 (VFTV…TAMI), and 128 to 148 (FLKA…PGIW).

It belongs to the ThrE exporter (TC 2.A.79) family. As to quaternary structure, the transporter is composed of YjjB and YjjP.

The protein resides in the cell inner membrane. Functionally, involved in succinate export with YjjP. Both proteins are required for export. The sequence is that of Probable succinate transporter subunit YjjB from Pectobacterium atrosepticum (strain SCRI 1043 / ATCC BAA-672) (Erwinia carotovora subsp. atroseptica).